A 429-amino-acid polypeptide reads, in one-letter code: Adenylosuccinate synthetase (429 aa).

GTP-binding positions include 12–18 (GDEGKGK) and 40–42 (GHT). Catalysis depends on aspartate 13, which acts as the Proton acceptor. Mg(2+) contacts are provided by aspartate 13 and glycine 40. Residues 13–16 (DEGK), 38–41 (NAGH), threonine 128, arginine 142, glutamine 223, threonine 238, and arginine 302 each bind IMP. The active-site Proton donor is the histidine 41. Residue 298–304 (VNTGRKR) coordinates substrate. GTP contacts are provided by residues arginine 304, 330–332 (KLD), and 412–414 (GVG).

The protein belongs to the adenylosuccinate synthetase family. Homodimer. The cofactor is Mg(2+).

It is found in the cytoplasm. The catalysed reaction is IMP + L-aspartate + GTP = N(6)-(1,2-dicarboxyethyl)-AMP + GDP + phosphate + 2 H(+). It functions in the pathway purine metabolism; AMP biosynthesis via de novo pathway; AMP from IMP: step 1/2. Functionally, plays an important role in the de novo pathway of purine nucleotide biosynthesis. Catalyzes the first committed step in the biosynthesis of AMP from IMP. This is Adenylosuccinate synthetase from Corynebacterium diphtheriae (strain ATCC 700971 / NCTC 13129 / Biotype gravis).